The primary structure comprises 419 residues: Glutamate dehydrogenase (419 aa).

Residue lysine 105 is part of the active site. 219 to 225 (GYGNAGY) is a binding site for NAD(+).

The protein belongs to the Glu/Leu/Phe/Val dehydrogenases family. In terms of assembly, homohexamer.

It catalyses the reaction L-glutamate + NAD(+) + H2O = 2-oxoglutarate + NH4(+) + NADH + H(+). It carries out the reaction L-glutamate + NADP(+) + H2O = 2-oxoglutarate + NH4(+) + NADPH + H(+). In Thermococcus profundus, this protein is Glutamate dehydrogenase (gdhA).